Here is a 109-residue protein sequence, read N- to C-terminus: Large ribosomal subunit protein uL24 (109 aa).

This sequence belongs to the universal ribosomal protein uL24 family. In terms of assembly, part of the 50S ribosomal subunit.

Functionally, one of two assembly initiator proteins, it binds directly to the 5'-end of the 23S rRNA, where it nucleates assembly of the 50S subunit. Its function is as follows. One of the proteins that surrounds the polypeptide exit tunnel on the outside of the subunit. The chain is Large ribosomal subunit protein uL24 from Ehrlichia ruminantium (strain Gardel).